We begin with the raw amino-acid sequence, 439 residues long: C4-dicarboxylate transport protein (439 aa).

9 consecutive transmembrane segments (helical) span residues 9 to 29 (HLYFQVLTAISIGVAVGYYMP), 45 to 65 (MIKMIITPIIFCTVVTGIAGM), 80 to 100 (LYFEAVSTLALAIGLMVINVI), 150 to 170 (GEILQVLFFAILFGLALSAMG), 186 to 206 (AFFGVVNIIMKFAPIGAFGAM), 221 to 241 (LGMLMGSFYLTCLLFIFVVLG), 291 to 311 (VVGLVIPTGYSFNLDGTSIYL), 334 to 354 (ILGVLMLTSKGAAGVTGSGFV), and 357 to 377 (AATFAAIPTIPVAGLALILGI).

Belongs to the dicarboxylate/amino acid:cation symporter (DAACS) (TC 2.A.23) family.

The protein resides in the cell inner membrane. Responsible for the transport of dicarboxylates such as succinate, fumarate, and malate from the periplasm across the membrane. The chain is C4-dicarboxylate transport protein from Citrifermentans bemidjiense (strain ATCC BAA-1014 / DSM 16622 / JCM 12645 / Bem) (Geobacter bemidjiensis).